The primary structure comprises 136 residues: Protein PsiE (136 aa).

The next 4 helical transmembrane spans lie at 15 to 35, 55 to 75, 82 to 102, and 108 to 128; these read ILQT…VVFL, YELV…ALIV, FHFP…RLII, and PLDV…LWLC.

This sequence belongs to the PsiE family.

It localises to the cell inner membrane. In Escherichia coli (strain UTI89 / UPEC), this protein is Protein PsiE.